We begin with the raw amino-acid sequence, 375 residues long: Succinyl-diaminopimelate desuccinylase (375 aa).

Position 66 (His-66) interacts with Zn(2+). Asp-68 is an active-site residue. Asp-99 provides a ligand contact to Zn(2+). Catalysis depends on Glu-133, which acts as the Proton acceptor. Residues Glu-134, Glu-162, and His-348 each coordinate Zn(2+).

This sequence belongs to the peptidase M20A family. DapE subfamily. In terms of assembly, homodimer. Requires Zn(2+) as cofactor. Co(2+) is required as a cofactor.

The catalysed reaction is N-succinyl-(2S,6S)-2,6-diaminopimelate + H2O = (2S,6S)-2,6-diaminopimelate + succinate. Its pathway is amino-acid biosynthesis; L-lysine biosynthesis via DAP pathway; LL-2,6-diaminopimelate from (S)-tetrahydrodipicolinate (succinylase route): step 3/3. Its function is as follows. Catalyzes the hydrolysis of N-succinyl-L,L-diaminopimelic acid (SDAP), forming succinate and LL-2,6-diaminopimelate (DAP), an intermediate involved in the bacterial biosynthesis of lysine and meso-diaminopimelic acid, an essential component of bacterial cell walls. This Aeromonas hydrophila subsp. hydrophila (strain ATCC 7966 / DSM 30187 / BCRC 13018 / CCUG 14551 / JCM 1027 / KCTC 2358 / NCIMB 9240 / NCTC 8049) protein is Succinyl-diaminopimelate desuccinylase.